A 1456-amino-acid chain; its full sequence is Leucine-rich repeat-containing protein 9 (1456 aa).

LRR repeat units lie at residues 53–78, 97–119, 120–141, 142–164, 166–188, 190–212, 224–248, and 264–287; these read FHNL…CLQL, CRNL…LEKL, IKLE…LQTL, KNLK…LDPN, QLEK…NLTK, TRLK…QLCN, LQRL…AMKK, and NEEL…RIKL. The segment at 305–325 is disordered; that stretch reads SSKGQSDTTPEAEKPRNSEVV. An LRR 9 repeat occupies 339–362; that stretch reads LSALDDRVTFWNKKLHEIEAIYRT. A Phosphotyrosine modification is found at Tyr525. 23 LRR repeats span residues 661–683, 684–705, 706–727, 729–748, 749–772, 776–802, 806–833, 876–898, 899–920, 921–942, 943–965, 967–991, 993–1010, 1013–1037, 1082–1105, 1106–1128, 1129–1151, 1191–1214, 1215–1237, 1238–1260, 1262–1283, 1284–1307, and 1309–1335; these read KPRP…TNIY, SHIV…LAKL, TGLR…VYHL, NLEY…GFRG, LMKL…INVL, TTSL…VIGR, LTHL…KITQ, YSKI…LEKL, ENLK…LESC, VNLE…ITRL, TKLS…TFDN, LHLH…TFTL, ELYI…IYNL, LCNL…RFFV, FIQM…PVDH, FRNV…LIYL, PNVK…LKPQ, MQSL…QLNR, LRNL…LDNL, IVLQ…AFSK, SSLL…LQSL, VKLE…KLDV, and PSLR…IFRL.

This chain is Leucine-rich repeat-containing protein 9 (Lrrc9), found in Mus musculus (Mouse).